The following is a 417-amino-acid chain: Serine hydroxymethyltransferase (417 aa).

Residues L116 and 120-122 each bind (6S)-5,6,7,8-tetrahydrofolate; that span reads GHL. The residue at position 225 (K225) is an N6-(pyridoxal phosphate)lysine.

This sequence belongs to the SHMT family. Homodimer. Requires pyridoxal 5'-phosphate as cofactor.

It is found in the cytoplasm. It carries out the reaction (6R)-5,10-methylene-5,6,7,8-tetrahydrofolate + glycine + H2O = (6S)-5,6,7,8-tetrahydrofolate + L-serine. It participates in one-carbon metabolism; tetrahydrofolate interconversion. Its pathway is amino-acid biosynthesis; glycine biosynthesis; glycine from L-serine: step 1/1. In terms of biological role, catalyzes the reversible interconversion of serine and glycine with tetrahydrofolate (THF) serving as the one-carbon carrier. This reaction serves as the major source of one-carbon groups required for the biosynthesis of purines, thymidylate, methionine, and other important biomolecules. Also exhibits THF-independent aldolase activity toward beta-hydroxyamino acids, producing glycine and aldehydes, via a retro-aldol mechanism. In Hydrogenobaculum sp. (strain Y04AAS1), this protein is Serine hydroxymethyltransferase.